Reading from the N-terminus, the 412-residue chain is GTPase Obg (412 aa).

One can recognise an Obg domain in the interval 1–159; it reads MKFLDQAKIF…RWIWLRLKMI (159 aa). The region spanning 160 to 327 is the OBG-type G domain; it reads ADAGLVGLPN…ILARLFTHIR (168 aa). Residues 166 to 173, 191 to 195, 212 to 215, 279 to 282, and 308 to 310 each bind GTP; these read GLPNAGKS, FTTLH, DIPG, NKCD, and SGV. The Mg(2+) site is built by serine 173 and threonine 193. A disordered region spans residues 335–412; that stretch reads AVPAASPIFG…ADDEEDDAEE (78 aa). The segment covering 385-412 has biased composition (acidic residues); the sequence is NDGDEVDEDYDDEDLEEVADDEEDDAEE.

The protein belongs to the TRAFAC class OBG-HflX-like GTPase superfamily. OBG GTPase family. Monomer. The cofactor is Mg(2+).

It localises to the cytoplasm. An essential GTPase which binds GTP, GDP and possibly (p)ppGpp with moderate affinity, with high nucleotide exchange rates and a fairly low GTP hydrolysis rate. Plays a role in control of the cell cycle, stress response, ribosome biogenesis and in those bacteria that undergo differentiation, in morphogenesis control. The polypeptide is GTPase Obg (Paramagnetospirillum magneticum (strain ATCC 700264 / AMB-1) (Magnetospirillum magneticum)).